A 239-amino-acid polypeptide reads, in one-letter code: Geranylgeranylglyceryl phosphate synthase (239 aa).

Lys13 contributes to the sn-glycerol 1-phosphate binding site. Positions 15 and 42 each coordinate Mg(2+). Sn-glycerol 1-phosphate-binding positions include 162 to 167 (YIEYSG), Gly192, and 212 to 213 (GD).

It belongs to the GGGP/HepGP synthase family. Group I subfamily. Requires Mg(2+) as cofactor.

It localises to the cytoplasm. The enzyme catalyses sn-glycerol 1-phosphate + (2E,6E,10E)-geranylgeranyl diphosphate = sn-3-O-(geranylgeranyl)glycerol 1-phosphate + diphosphate. The protein operates within membrane lipid metabolism; glycerophospholipid metabolism. In terms of biological role, prenyltransferase that catalyzes the transfer of the geranylgeranyl moiety of geranylgeranyl diphosphate (GGPP) to the C3 hydroxyl of sn-glycerol-1-phosphate (G1P). This reaction is the first ether-bond-formation step in the biosynthesis of archaeal membrane lipids. This Haloquadratum walsbyi (strain DSM 16790 / HBSQ001) protein is Geranylgeranylglyceryl phosphate synthase.